A 208-amino-acid chain; its full sequence is Casparian strip membrane protein 2 (208 aa).

Residues 1–23 (MDSKSGRSESAINIPESNSTKHK) are disordered. Residues 1-46 (MDSKSGRSESAINIPESNSTKHKSTVVHTATKVAAVAPRGGGWRRG) are Cytoplasmic-facing. The span at 8 to 18 (SESAINIPESN) shows a compositional bias: polar residues. A helical transmembrane segment spans residues 47–67 (VSIFDFILRICALAAALAATA). At 68-96 (TMGTTDQTLPFFTQFFQFQASYDDLPAFT) the chain is on the extracellular side. A helical transmembrane segment spans residues 97-117 (FFVVANGIASGYLVLSLPFSI). Topologically, residues 118-129 (ATIVRPHAAAIK) are cytoplasmic. The helical transmembrane segment at 130-150 (LLLIIFDTVMVAFTAAAAAAA) threads the bilayer. Residues 151 to 184 (AAIVYLAHNGNSKTNWFAICQQFNDFCQRVSGAV) are Extracellular-facing. Residues 185 to 205 (VASFVAAVILIFLVVLSAVAI) form a helical membrane-spanning segment. Residues 206 to 208 (RKH) lie on the Cytoplasmic side of the membrane.

Belongs to the Casparian strip membrane proteins (CASP) family. In terms of assembly, homodimer and heterodimers.

It is found in the cell membrane. Regulates membrane-cell wall junctions and localized cell wall deposition. Required for establishment of the Casparian strip membrane domain (CSD) and the subsequent formation of Casparian strips, a cell wall modification of the root endodermis that determines an apoplastic barrier between the intraorganismal apoplasm and the extraorganismal apoplasm and prevents lateral diffusion. The protein is Casparian strip membrane protein 2 of Triphysaria pusilla (Dwarf owl's-clover).